Reading from the N-terminus, the 361-residue chain is uncharacterized protein (361 aa).

The signal sequence occupies residues 1 to 28 (MSKSKFTKIIVVICIAAMFITGTSILSF).

This is an uncharacterized protein from Ruminiclostridium cellulolyticum (strain ATCC 35319 / DSM 5812 / JCM 6584 / H10) (Clostridium cellulolyticum).